Here is a 179-residue protein sequence, read N- to C-terminus: Large ribosomal subunit protein uL6 (179 aa).

Belongs to the universal ribosomal protein uL6 family. In terms of assembly, part of the 50S ribosomal subunit.

Its function is as follows. This protein binds to the 23S rRNA, and is important in its secondary structure. It is located near the subunit interface in the base of the L7/L12 stalk, and near the tRNA binding site of the peptidyltransferase center. This chain is Large ribosomal subunit protein uL6, found in Syntrophus aciditrophicus (strain SB).